The primary structure comprises 137 residues: Large ribosomal subunit protein uL16 (137 aa).

Residues 1–20 (MLQPSNRKYRKDFKGRNRGV) form a disordered region. Basic residues predominate over residues 7-17 (RKYRKDFKGRN).

Belongs to the universal ribosomal protein uL16 family. As to quaternary structure, part of the 50S ribosomal subunit.

Functionally, binds 23S rRNA and is also seen to make contacts with the A and possibly P site tRNAs. In Coxiella burnetii (strain CbuG_Q212) (Coxiella burnetii (strain Q212)), this protein is Large ribosomal subunit protein uL16.